The following is a 93-amino-acid chain: Acylphosphatase (93 aa).

Residues 7–93 (RAHVFVSGTV…EGIDGFHIRR (87 aa)) enclose the Acylphosphatase-like domain. Active-site residues include Arg22 and Asn40.

It belongs to the acylphosphatase family.

The catalysed reaction is an acyl phosphate + H2O = a carboxylate + phosphate + H(+). This is Acylphosphatase (acyP) from Haloquadratum walsbyi (strain DSM 16790 / HBSQ001).